The following is a 196-amino-acid chain: Dual-action ribosomal maturation protein DarP (196 aa).

Belongs to the DarP family.

It is found in the cytoplasm. Functionally, member of a network of 50S ribosomal subunit biogenesis factors which assembles along the 30S-50S interface, preventing incorrect 23S rRNA structures from forming. Promotes peptidyl transferase center (PTC) maturation. The polypeptide is Dual-action ribosomal maturation protein DarP (Stenotrophomonas maltophilia (strain R551-3)).